A 363-amino-acid polypeptide reads, in one-letter code: Tetraacyldisaccharide 4'-kinase (363 aa).

62-69 lines the ATP pocket; the sequence is RVGGTGKT.

Belongs to the LpxK family.

The catalysed reaction is a lipid A disaccharide + ATP = a lipid IVA + ADP + H(+). It participates in glycolipid biosynthesis; lipid IV(A) biosynthesis; lipid IV(A) from (3R)-3-hydroxytetradecanoyl-[acyl-carrier-protein] and UDP-N-acetyl-alpha-D-glucosamine: step 6/6. In terms of biological role, transfers the gamma-phosphate of ATP to the 4'-position of a tetraacyldisaccharide 1-phosphate intermediate (termed DS-1-P) to form tetraacyldisaccharide 1,4'-bis-phosphate (lipid IVA). The protein is Tetraacyldisaccharide 4'-kinase of Polynucleobacter asymbioticus (strain DSM 18221 / CIP 109841 / QLW-P1DMWA-1) (Polynucleobacter necessarius subsp. asymbioticus).